The primary structure comprises 65 residues: uncharacterized protein (65 aa).

A DNA-binding region (ompR/PhoB-type) is located at residues 1–65; it reads MIALSVCWQI…ETGIGYRFML (65 aa).

This is an uncharacterized protein from Escherichia coli (strain K12).